A 414-amino-acid chain; its full sequence is MSGASSGTAIGAHLFGVSPECRVLIGDEGAGPSKSLSEVSFSVWYQSRAARLVIFCLVASFLVPCLTFLIAETVMGQTIATPLSLTLDHWSEVRARAHNQGVEVRKKKWVTLCEAEWVMMNVGWPREGTFSLDNISQVEKKIFAPGPYGHPDQVPYITTWRSLATDPPSWVRPFLPPPKPPTPLPQPLSPQPSAPLTSSLYPVLPKTDPPKPPVLPPDPSSPLIDLLTEEPPPYPGGHGPLPSGPRTPTASPIASRLRERRENPAEESQALPLREGPNNRPQYWPFSASDLYNWKSHNPPFSQDPVALTNLIESILVTHQPTWDDCQQLLQALLTGEERQRVLLEARKQVPGEDGRPTQLPNVIDETFPLTRPNWDFATPAGREHLRLYRQLLLAGLRGAARRPTNLAQVKQVV.

The Cytoplasmic segment spans residues 1 to 51 (MSGASSGTAIGAHLFGVSPECRVLIGDEGAGPSKSLSEVSFSVWYQSRAAR). The chain crosses the membrane as a helical span at residues 52 to 72 (LVIFCLVASFLVPCLTFLIAE). Topologically, residues 73–414 (TVMGQTIATP…TNLAQVKQVV (342 aa)) are extracellular. N134 carries an N-linked (GlcNAc...) asparagine; by host glycan. The segment at 171 to 282 (VRPFLPPPKP…LREGPNNRPQ (112 aa)) is disordered. The span at 174 to 193 (FLPPPKPPTPLPQPLSPQPS) shows a compositional bias: pro residues. Low complexity predominate over residues 194–206 (APLTSSLYPVLPK). Residues 210 to 220 (PKPPVLPPDPS) show a composition bias toward pro residues.

Post-translationally, glycosylated by host. Cleaved by host near the middle of the molecule, releasing the c-terminal half containing capsid and nucleoprotein domains op GAG.

It is found in the host cell membrane. Functionally, plays a role in viral particle release. Presumably acts by facilitating the fission of the virion bud at the cell surface. The polypeptide is Glyco-Gag protein (Felidae (cat family)).